The sequence spans 324 residues: Lipoyl synthase (324 aa).

Cys-72, Cys-77, Cys-83, Cys-98, Cys-102, Cys-105, and Ser-313 together coordinate [4Fe-4S] cluster. A Radical SAM core domain is found at 84-302 (FRFGTASFMI…AQEGKKMGFL (219 aa)).

Belongs to the radical SAM superfamily. Lipoyl synthase family. [4Fe-4S] cluster is required as a cofactor.

Its subcellular location is the cytoplasm. The catalysed reaction is [[Fe-S] cluster scaffold protein carrying a second [4Fe-4S](2+) cluster] + N(6)-octanoyl-L-lysyl-[protein] + 2 oxidized [2Fe-2S]-[ferredoxin] + 2 S-adenosyl-L-methionine + 4 H(+) = [[Fe-S] cluster scaffold protein] + N(6)-[(R)-dihydrolipoyl]-L-lysyl-[protein] + 4 Fe(3+) + 2 hydrogen sulfide + 2 5'-deoxyadenosine + 2 L-methionine + 2 reduced [2Fe-2S]-[ferredoxin]. It functions in the pathway protein modification; protein lipoylation via endogenous pathway; protein N(6)-(lipoyl)lysine from octanoyl-[acyl-carrier-protein]: step 2/2. Its function is as follows. Catalyzes the radical-mediated insertion of two sulfur atoms into the C-6 and C-8 positions of the octanoyl moiety bound to the lipoyl domains of lipoate-dependent enzymes, thereby converting the octanoylated domains into lipoylated derivatives. The polypeptide is Lipoyl synthase (Dichelobacter nodosus (strain VCS1703A)).